A 126-amino-acid chain; its full sequence is Small ribosomal subunit protein uS11 (126 aa).

This sequence belongs to the universal ribosomal protein uS11 family. Part of the 30S ribosomal subunit. Interacts with proteins S7 and S18. Binds to IF-3.

Functionally, located on the platform of the 30S subunit, it bridges several disparate RNA helices of the 16S rRNA. Forms part of the Shine-Dalgarno cleft in the 70S ribosome. The protein is Small ribosomal subunit protein uS11 of Orientia tsutsugamushi (strain Boryong) (Rickettsia tsutsugamushi).